Reading from the N-terminus, the 594-residue chain is Lipolysis-stimulated lipoprotein receptor (594 aa).

Residues 1 to 35 (MAPAASACAGAPGSHPATTIFVCLFLIIYCPDRAS) form the signal peptide. At 36-206 (AIQVTVPDPY…PGFRAGPLED (171 aa)) the chain is on the extracellular side. The Ig-like V-type domain occupies 89 to 181 (PASVDNQLNA…DLDGNNEAYA (93 aa)). A disulfide bridge links Cys113 with Cys165. Residues 207 to 227 (WLFVVVVCLASLLFFLLLGIC) form a helical membrane-spanning segment. Residues 228-594 (WCQCCPHTCC…LALSRESLVV (367 aa)) lie on the Cytoplasmic side of the membrane. A Phosphothreonine modification is found at Thr283. A Phosphoserine; by MAPK8 and MAPK9 modification is found at Ser308. Phosphoserine occurs at positions 314, 332, 375, and 379. A compositionally biased stretch (basic and acidic residues) spans 375-387 (SEVTSLHEDDWRS). The disordered stretch occupies residues 375-594 (SEVTSLHEDD…LALSRESLVV (220 aa)). Thr396 is modified (phosphothreonine). Phosphoserine is present on residues Ser407, Ser410, and Ser436. Residues 435–444 (RSVDALDDIN) show a composition bias toward basic and acidic residues. Residues 445–460 (RPGSTESGRSSPPSSG) are compositionally biased toward low complexity. 2 positions are modified to phosphoserine: Ser471 and Ser473. The segment covering 472–550 (RSRDDLYDPD…GAGERRRVYR (79 aa)) has biased composition (basic and acidic residues). Tyr478 is subject to Phosphotyrosine. Phosphoserine is present on Ser576. Lys583 is covalently cross-linked (Glycyl lysine isopeptide (Lys-Gly) (interchain with G-Cter in ubiquitin)). Ser588 and Ser591 each carry phosphoserine.

Belongs to the immunoglobulin superfamily. LISCH7 family. Homotrimer or homotetramer. Assembles into cell-cell contacts. Interacts (via the cytoplasmic domain) with MARVELD2 (via C-terminal cytoplasmic domain); the interaction is required to recruit MARVELD2 to tricellular contacts. Interacts with OCLN. In terms of processing, phosphorylation at Ser-308 by MAPK8/JNK1 and MAPK9/JNK2 may be required for exclusive localization at tricellular tight junstions. Post-translationally, polyubiquitinated at Lys-583 via 'Lys-63'-linked ubiquitin chains; deubiquitinated by USP53. As to expression, expressed in epithelial tissues (at protein level). Specifically expressed in liver and to a lower extent in kidney (at protein level). Also detected in brain, testis, ovaries, adrenal gland, intestine, muscle, and lung. In colon, only expressed in the lower portion of crypts. Expressed in the liver. Expressed in liver, stomach, small intestine and colon. Also detected in other epithelial tissues.

It is found in the cell membrane. It localises to the cell junction. Its subcellular location is the tight junction. Functionally, probable role in the clearance of triglyceride-rich lipoprotein from blood. Binds chylomicrons, LDL and VLDL in presence of free fatty acids and allows their subsequent uptake in the cells. Maintains epithelial barrier function by recruiting MARVELD2/tricellulin to tricellular tight junctions. The sequence is that of Lipolysis-stimulated lipoprotein receptor from Mus musculus (Mouse).